Consider the following 244-residue polypeptide: uncharacterized protein (244 aa).

The signal sequence occupies residues 1–18 (MQFSVLCKFLLLVTAVMA). The Lumenal portion of the chain corresponds to 19-223 (QTEYTPGFTT…TTIPSSAVHY (205 aa)). 2 stretches are compositionally biased toward low complexity: residues 55–65 (ETSTHSVTSTN) and 75–128 (TSHN…TTHV). The segment at 55–128 (ETSTHSVTST…TTVVPPTTHV (74 aa)) is disordered. A helical membrane pass occupies residues 224 to 244 (ASPSGLLALVVMLISAFAFLA).

The protein resides in the endoplasmic reticulum membrane. This is an uncharacterized protein from Schizosaccharomyces pombe (strain 972 / ATCC 24843) (Fission yeast).